The sequence spans 744 residues: Tripartite motif-containing protein 2 (744 aa).

At serine 10 the chain carries Phosphoserine. The segment at 23–64 adopts an RING-type zinc-finger fold; that stretch reads CSICLERYKNPKVLPCLHTFCERCLQNYIPAHSLTLSCPVCR. The B box-type zinc finger occupies 113–154; the sequence is GKPLSCPNHDGNVMEFYCQSCETAMCRECTEGEHAEHPTVPL. Zn(2+)-binding residues include cysteine 118, histidine 121, cysteine 141, and histidine 146. A Filamin repeat occupies 320 to 421; that stretch reads TTNAVASETV…IRGSPFKLKV (102 aa). The residue at position 371 (threonine 371) is a Phosphothreonine. Phosphoserine occurs at positions 375, 424, and 428. Residues 432–462 form a disordered region; the sequence is EGVKRRVKSPGSGHVKQKAVKRPASMYSTGK. 6 NHL repeats span residues 473–516, 520–563, 564–605, 609–652, 656–699, and 700–743; these read IFRV…FSND, KSRF…FSSD, GKFK…FQPN, VTRF…FNQE, MLKF…FDGS, and GSFL…YRYL.

It belongs to the TRIM/RBCC family. Forms homooligomers. Interacts with TRIM3; this interaction reduces TRIM2 activity. Interacts with myosin V; myosin V may not be a substrate for ubiquitination. Interacts with NEFL. Interacts with phosphorylated BCL2L11. Interacts with SIRPA. Post-translationally, RING-type zinc finger-dependent and UBE2D1-dependent autoubiquitination.

It localises to the cytoplasm. The catalysed reaction is S-ubiquitinyl-[E2 ubiquitin-conjugating enzyme]-L-cysteine + [acceptor protein]-L-lysine = [E2 ubiquitin-conjugating enzyme]-L-cysteine + N(6)-ubiquitinyl-[acceptor protein]-L-lysine.. Its pathway is protein modification; protein ubiquitination. In terms of biological role, UBE2D1-dependent E3 ubiquitin-protein ligase that mediates the ubiquitination of NEFL and of phosphorylated BCL2L11. Plays a neuroprotective function. May play a role in neuronal rapid ischemic tolerance. Plays a role in antiviral immunity and limits New World arenavirus infection independently of its ubiquitin ligase activity. The chain is Tripartite motif-containing protein 2 (TRIM2) from Homo sapiens (Human).